A 244-amino-acid polypeptide reads, in one-letter code: Orotidine 5'-phosphate decarboxylase (244 aa).

Substrate contacts are provided by residues aspartate 10, lysine 32, 59–68 (DLKLHDIPNT), threonine 122, arginine 184, glutamine 193, glycine 213, and arginine 214. Lysine 61 functions as the Proton donor in the catalytic mechanism.

This sequence belongs to the OMP decarboxylase family. Type 1 subfamily. Homodimer.

The catalysed reaction is orotidine 5'-phosphate + H(+) = UMP + CO2. It functions in the pathway pyrimidine metabolism; UMP biosynthesis via de novo pathway; UMP from orotate: step 2/2. Functionally, catalyzes the decarboxylation of orotidine 5'-monophosphate (OMP) to uridine 5'-monophosphate (UMP). In Geobacillus kaustophilus (strain HTA426), this protein is Orotidine 5'-phosphate decarboxylase.